The sequence spans 565 residues: DNA mismatch repair protein MutL (565 aa).

This sequence belongs to the DNA mismatch repair MutL/HexB family.

Functionally, this protein is involved in the repair of mismatches in DNA. It is required for dam-dependent methyl-directed DNA mismatch repair. May act as a 'molecular matchmaker', a protein that promotes the formation of a stable complex between two or more DNA-binding proteins in an ATP-dependent manner without itself being part of a final effector complex. This chain is DNA mismatch repair protein MutL, found in Desulforudis audaxviator (strain MP104C).